We begin with the raw amino-acid sequence, 264 residues long: Aminoglycoside 3'-phosphotransferase (264 aa).

Residue aspartate 190 is the Proton acceptor of the active site.

The protein belongs to the aminoglycoside phosphotransferase family.

It carries out the reaction kanamycin A + ATP = kanamycin 3'-phosphate + ADP + H(+). In terms of biological role, resistance to kanamycin and structurally-related aminoglycosides, including amikacin. The sequence is that of Aminoglycoside 3'-phosphotransferase (aphA) from Enterococcus faecalis (Streptococcus faecalis).